A 575-amino-acid polypeptide reads, in one-letter code: Acetylcholine receptor subunit beta-type acr-2 (575 aa).

The first 20 residues, 1–20 (MKKTVKILLILITVFLKVHC), serve as a signal peptide directing secretion. Residues 21–270 (NGGHDDEAAD…IRRKTLFYTV (250 aa)) lie on the Extracellular side of the membrane. The tract at residues 31–57 (FLSHTNIDDPNNSSDPNKNSDQGDTMG) is disordered. Positions 38–50 (DDPNNSSDPNKNS) are enriched in low complexity. N-linked (GlcNAc...) asparagine glycosylation is found at N41, N42, N80, and N131. Cysteines 185 and 199 form a disulfide. Transmembrane regions (helical) follow at residues 271 to 291 (ILIIPTVLMAFLSVMAFYLPV), 299 to 319 (LTISLLLALVVFLLLVSKILP), and 331 to 351 (LLLAFVLNITAVVGTVVIVNI). Residues 352 to 527 (YFRSALSHKM…WKYVAMVLDR (176 aa)) are Cytoplasmic-facing. A helical transmembrane segment spans residues 528-548 (LILLIFFGVTLGGTLGIICSA).

This sequence belongs to the ligand-gated ion channel (TC 1.A.9) family. Acetylcholine receptor (TC 1.A.9.1) subfamily. As to quaternary structure, component of nicotinic acetylcholine receptor. In cholinergic motoneurons, composed of 2 non-alpha subunits acr-2 and acr-3, and 3 alpha subunits unc-38, unc-63 and acr-12. As to expression, specifically expressed in cholinergic ventral cord motoneurons of the VA, VB, DA and DB classes but not AS and VC classes. Expressed in PVQ and DVC neurons in the tail.

It localises to the postsynaptic cell membrane. Its subcellular location is the cell membrane. Its function is as follows. Non-alpha subunit of nicotinic acetylcholine receptor (nAChR). Acts in cholinergic motoneurons to regulate presynaptic neurotransmitter release, thereby ensuring normal level of excitation of cholinergic motoneurons during locomotion. The chain is Acetylcholine receptor subunit beta-type acr-2 (acr-2) from Caenorhabditis elegans.